A 391-amino-acid chain; its full sequence is Anhydro-N-acetylmuramic acid kinase (391 aa).

An ATP-binding site is contributed by 9 to 16 (GTSVDGID).

This sequence belongs to the anhydro-N-acetylmuramic acid kinase family.

It carries out the reaction 1,6-anhydro-N-acetyl-beta-muramate + ATP + H2O = N-acetyl-D-muramate 6-phosphate + ADP + H(+). It participates in amino-sugar metabolism; 1,6-anhydro-N-acetylmuramate degradation. The protein operates within cell wall biogenesis; peptidoglycan recycling. Its function is as follows. Catalyzes the specific phosphorylation of 1,6-anhydro-N-acetylmuramic acid (anhMurNAc) with the simultaneous cleavage of the 1,6-anhydro ring, generating MurNAc-6-P. Is required for the utilization of anhMurNAc either imported from the medium or derived from its own cell wall murein, and thus plays a role in cell wall recycling. The chain is Anhydro-N-acetylmuramic acid kinase from Gloeothece citriformis (strain PCC 7424) (Cyanothece sp. (strain PCC 7424)).